Consider the following 207-residue polypeptide: MTCTIDKILQDAKTLLERLKDHDNAAESLIDQSSALHKRVEAMKEVGTAMPEKYQEELADIKDASKLKPHVLLCQENTQIRDLQQENKELWVSLEEHQYALELIMSKYRKQMLQLVANKKPAPTEPVLEAHKTFSSDLECQIDRICVMGDIMRDAIQLDEDKAYNIQEKLAQLELENKELREILSTSKESLHSSKRESEWNFSEKTQ.

Coiled-coil stretches lie at residues 4–32 and 154–193; these read TIDK…LIDQ and DAIQ…SLHS. The segment at 186–207 is disordered; sequence TSKESLHSSKRESEWNFSEKTQ. A compositionally biased stretch (basic and acidic residues) spans 189–199; it reads ESLHSSKRESE.

The protein belongs to the SIKE family. Interacts with IKBKE and TBK1 via its coiled coil region. Interaction with TBK1 is disrupted upon viral infection or TLR3 stimulation. Interacts with CDC42BPB. Associates with the STRIPAK core complex composed of PP2A catalytic and scaffolding subunits, the striatins (PP2A regulatory subunits), the striatin-associated proteins MOB4, STRIP1 and STRIP2, PDCD10 and members of the STE20 kinases, such as STK24 and STK26.

Suppressor of IKK-epsilon. Associates with the striatin-interacting phosphatase and kinase (STRIPAK) core complex, forming the extended (SIKE1:SLMAP)STRIPAK complex. The (SIKE1:SLMAP)STRIPAK complex dephosphorylates STK3 leading to the inhibition of Hippo signaling and the control of cell growth. The chain is Suppressor of IKBKE 1 (sike1) from Xenopus tropicalis (Western clawed frog).